The sequence spans 684 residues: DNA gyrase subunit B, novobiocin-sensitive (684 aa).

Residues 1 to 22 (MADSGNPNENTPSVATGENGEV) form a disordered region. The novobiocin-binding stretch occupies residues 154–302 (VKTDGYRWTQ…RMLSVEIAMQ (149 aa)). Residues 463–577 (CEIFIVEGDS…AGHVYLSRPP (115 aa)) enclose the Toprim domain. Mg(2+)-binding residues include E469, D542, and D544.

It belongs to the type II topoisomerase GyrB family. In terms of assembly, heterotetramer, composed of two GyrA and two GyrB chains. In the heterotetramer, GyrA contains the active site tyrosine that forms a transient covalent intermediate with DNA, while GyrB binds cofactors and catalyzes ATP hydrolysis. It depends on Mg(2+) as a cofactor. The cofactor is Mn(2+). Ca(2+) is required as a cofactor.

The protein resides in the cytoplasm. The enzyme catalyses ATP-dependent breakage, passage and rejoining of double-stranded DNA.. Functionally, a type II topoisomerase that negatively supercoils closed circular double-stranded (ds) DNA in an ATP-dependent manner to modulate DNA topology and maintain chromosomes in an underwound state. Negative supercoiling favors strand separation, and DNA replication, transcription, recombination and repair, all of which involve strand separation. Also able to catalyze the interconversion of other topological isomers of dsDNA rings, including catenanes and knotted rings. Type II topoisomerases break and join 2 DNA strands simultaneously in an ATP-dependent manner. This is DNA gyrase subunit B, novobiocin-sensitive from Streptomyces niveus (Streptomyces spheroides).